The primary structure comprises 90 residues: Sec-independent protein translocase protein TatA (90 aa).

A helical transmembrane segment spans residues 1 to 21; the sequence is MGLPGGWELVLIVGVLVLLFG. Positions 42 to 60 are enriched in basic and acidic residues; the sequence is EARGMKEDEEAAKREKQAK. Residues 42 to 90 are disordered; the sequence is EARGMKEDEEAAKREKQAKSEPQQLTAGESSAPTVASPVEETQRNDSKK. The segment covering 61–75 has biased composition (polar residues); that stretch reads SEPQQLTAGESSAPT.

This sequence belongs to the TatA/E family. As to quaternary structure, the Tat system comprises two distinct complexes: a TatABC complex, containing multiple copies of TatA, TatB and TatC subunits, and a separate TatA complex, containing only TatA subunits. Substrates initially bind to the TatABC complex, which probably triggers association of the separate TatA complex to form the active translocon.

Its subcellular location is the cell membrane. Functionally, part of the twin-arginine translocation (Tat) system that transports large folded proteins containing a characteristic twin-arginine motif in their signal peptide across membranes. TatA could form the protein-conducting channel of the Tat system. This is Sec-independent protein translocase protein TatA from Saccharopolyspora erythraea (strain ATCC 11635 / DSM 40517 / JCM 4748 / NBRC 13426 / NCIMB 8594 / NRRL 2338).